The chain runs to 299 residues: tRNA dimethylallyltransferase (299 aa).

13-20 lines the ATP pocket; sequence GPTASGKT. 15–20 provides a ligand contact to substrate; the sequence is TASGKT. Residues 38-41 are interaction with substrate tRNA; it reads DSRQ.

This sequence belongs to the IPP transferase family. In terms of assembly, monomer. Mg(2+) serves as cofactor.

It carries out the reaction adenosine(37) in tRNA + dimethylallyl diphosphate = N(6)-dimethylallyladenosine(37) in tRNA + diphosphate. Catalyzes the transfer of a dimethylallyl group onto the adenine at position 37 in tRNAs that read codons beginning with uridine, leading to the formation of N6-(dimethylallyl)adenosine (i(6)A). The chain is tRNA dimethylallyltransferase from Prochlorococcus marinus (strain AS9601).